A 58-amino-acid chain; its full sequence is Small ribosomal subunit protein bS21 (58 aa).

Positions 37 to 58 (FYDKPSVKKRAKSKAAAKYRGR) are disordered. Over residues 43-58 (VKKRAKSKAAAKYRGR) the composition is skewed to basic residues.

The protein belongs to the bacterial ribosomal protein bS21 family.

In Chlamydia muridarum (strain MoPn / Nigg), this protein is Small ribosomal subunit protein bS21 (rpsU).